The chain runs to 271 residues: ATP synthase subunit a (271 aa).

The next 5 membrane-spanning stretches (helical) occupy residues 40–60 (TINI…LVLF), 100–120 (LIAP…LMDL), 146–166 (DVNV…FYSI), 220–240 (LIFI…LNVP), and 242–262 (AIFH…LTIV).

This sequence belongs to the ATPase A chain family. F-type ATPases have 2 components, CF(1) - the catalytic core - and CF(0) - the membrane proton channel. CF(1) has five subunits: alpha(3), beta(3), gamma(1), delta(1), epsilon(1). CF(0) has three main subunits: a(1), b(2) and c(9-12). The alpha and beta chains form an alternating ring which encloses part of the gamma chain. CF(1) is attached to CF(0) by a central stalk formed by the gamma and epsilon chains, while a peripheral stalk is formed by the delta and b chains.

Its subcellular location is the cell inner membrane. Its function is as follows. Key component of the proton channel; it plays a direct role in the translocation of protons across the membrane. This Escherichia coli O8 (strain IAI1) protein is ATP synthase subunit a.